Here is a 212-residue protein sequence, read N- to C-terminus: Dephospho-CoA kinase (212 aa).

One can recognise a DPCK domain in the interval 4–204 (IVALTGGICS…RDYLKAEKTT (201 aa)). Residue 12–17 (CSGKSV) participates in ATP binding.

This sequence belongs to the CoaE family.

It localises to the cytoplasm. The enzyme catalyses 3'-dephospho-CoA + ATP = ADP + CoA + H(+). It functions in the pathway cofactor biosynthesis; coenzyme A biosynthesis; CoA from (R)-pantothenate: step 5/5. In terms of biological role, catalyzes the phosphorylation of the 3'-hydroxyl group of dephosphocoenzyme A to form coenzyme A. The protein is Dephospho-CoA kinase of Blochmanniella pennsylvanica (strain BPEN).